We begin with the raw amino-acid sequence, 363 residues long: tRNA(Met) cytidine acetate ligase (363 aa).

Residues 7–20, glycine 96, asparagine 152, and arginine 175 each bind ATP; that span reads IAEY…HKYL.

This sequence belongs to the TmcAL family.

The protein localises to the cytoplasm. The catalysed reaction is cytidine(34) in elongator tRNA(Met) + acetate + ATP = N(4)-acetylcytidine(34) in elongator tRNA(Met) + AMP + diphosphate. Catalyzes the formation of N(4)-acetylcytidine (ac(4)C) at the wobble position of elongator tRNA(Met), using acetate and ATP as substrates. First activates an acetate ion to form acetyladenylate (Ac-AMP) and then transfers the acetyl group to tRNA to form ac(4)C34. This Streptococcus suis (strain 98HAH33) protein is tRNA(Met) cytidine acetate ligase.